Reading from the N-terminus, the 430-residue chain is Glial fibrillary acidic protein (430 aa).

The interval 1–69 is head; it reads MERRRITSAR…KETRASERAE (69 aa). Phosphothreonine; by AURKB and ROCK1 is present on threonine 7. Omega-N-methylarginine is present on arginine 11. Serine 12 carries the phosphoserine; by AURKB and ROCK1 modification. Residue arginine 20 is modified to Omega-N-methylarginine. Residue arginine 33 is modified to Citrulline. Phosphoserine; by AURKB and ROCK1 is present on serine 35. Threonine 40 is modified (phosphothreonine). Residues 66 to 374 enclose the IF rod domain; sequence ERAEMMELND…KLLEGEENRI (309 aa). The tract at residues 70–101 is coil 1A; it reads MMELNDRFASYIEKVRFLEQQNKALAAELNQL. Serine 79 carries the phosphoserine modification. Residues 102–112 form a linker 1 region; the sequence is RAKEPTKLADV. Phosphothreonine occurs at positions 107 and 147. Residues 113 to 211 are coil 1B; that stretch reads YQAELRELRL…EEEVRELREQ (99 aa). The linker 12 stretch occupies residues 212–227; it reads LAQQQVHVEMDVAKPD. Positions 228–249 are coil 2A; it reads LTAALREIRTQYEAVATSNMQE. The linker 2 stretch occupies residues 250-253; the sequence is TEEW. Residues 254-374 are coil 2B; that stretch reads YRSKFADLTD…KLLEGEENRI (121 aa). Serine 266 carries the phosphoserine modification. A Citrulline modification is found at arginine 267. Serine 320 carries the phosphoserine modification. The tract at residues 375–430 is tail; it reads TIPVQTFSNLQIRETSLDTKSVSEGHLKRNIVVKTVEMRDGEVIKDSKQEHKDVVM. The residue at position 380 (threonine 380) is a Phosphothreonine. At serine 382 the chain carries Phosphoserine. Citrulline is present on residues arginine 403 and arginine 413.

It belongs to the intermediate filament family. In terms of assembly, interacts with SYNM. Interacts with PSEN1 (via N-terminus). In terms of processing, phosphorylated by PKN1. In terms of tissue distribution, brain; isoform 2 expressed at 20-fold lower level than isoform 1.

Its subcellular location is the cytoplasm. GFAP, a class-III intermediate filament, is a cell-specific marker that, during the development of the central nervous system, distinguishes astrocytes from other glial cells. This Mus musculus (Mouse) protein is Glial fibrillary acidic protein (Gfap).